The following is a 3587-amino-acid chain: Surfactin synthase subunit 1 (3587 aa).

Carrier domains lie at 971-1046 (APRN…DHRE), 2010-2085 (APRN…ASAE), and 3038-3112 (APTT…ERAE). O-(pantetheine 4'-phosphoryl)serine occurs at positions 1006, 2045, and 3073.

It belongs to the ATP-dependent AMP-binding enzyme family. Pantetheine 4'-phosphate is required as a cofactor.

The protein operates within antibiotic biosynthesis; surfactin biosynthesis. Functionally, this protein is a multifunctional enzyme able to activate and polymerize the amino acids Leu, Glu, Asp and Val. Activation sites for these AA consist of individual domains. The protein is Surfactin synthase subunit 1 (srfAA) of Bacillus subtilis (strain 168).